The sequence spans 115 residues: U3-lycotoxin-Ls1f (115 aa).

An N-terminal signal peptide occupies residues 1–20; sequence MKFVLLFGVLLVTLFSYSSA. Positions 21–44 are excised as a propeptide; sequence EMLDDFDQADEDELLSLIEKEEAR. 4 disulfides stabilise this stretch: Cys-48–Cys-63, Cys-55–Cys-72, Cys-62–Cys-87, and Cys-74–Cys-85.

Belongs to the neurotoxin 19 (CSTX) family. 01 subfamily. Expressed by the venom gland.

The protein resides in the secreted. The chain is U3-lycotoxin-Ls1f from Lycosa singoriensis (Wolf spider).